The following is a 109-amino-acid chain: Spermidine export protein MdtI (109 aa).

Transmembrane regions (helical) follow at residues 6–26 (WIHG…NVLL), 36–56 (CYGI…SQAV), 64–84 (AYAL…WVLF), and 88–108 (LNPK…MIKF).

This sequence belongs to the drug/metabolite transporter (DMT) superfamily. Small multidrug resistance (SMR) (TC 2.A.7.1) family. MdtI subfamily. Forms a complex with MdtJ.

Its subcellular location is the cell inner membrane. Its function is as follows. Catalyzes the excretion of spermidine. This is Spermidine export protein MdtI from Salmonella choleraesuis (strain SC-B67).